Reading from the N-terminus, the 48-residue chain is Protein TUNAR (48 aa).

The tract at residues 1 to 20 (MVITSENDEDRGGQEKESKE) is disordered. Basic and acidic residues predominate over residues 10–20 (DRGGQEKESKE). A helical membrane pass occupies residues 24 to 44 (LAMLGIIGTILNLIVIIFVYI).

As to quaternary structure, interacts with ATPase ATP2A2/SERCA2. Interacts with ATPase ATP2A3/SERCA3; the interaction occurs at low levels in low glucose conditions and is increased by high glucose levels. In terms of tissue distribution, highly expressed in pancreatic islets where it is enriched in the insulin-producing beta cells.

The protein resides in the endoplasmic reticulum membrane. It is found in the extracellular vesicle membrane. Its function is as follows. In neurons, plays a role in the regulation of intracellular Ca(2+), possibly by acting as an activator of ATP2A2/SERCA2, thus increasing the efficiency with which Ca(2+) is removed from the cytoplasm. Inhibits differentiation of embryonic stem cells into neurons and inhibits neurite outgrowth, likely as a result of its role in intracellular Ca(2+) regulation. In pancreatic beta cells, lowers Ca(2+) levels in the endoplasmic reticulum and enhances glucose-stimulated insulin secretion. The protein is Protein TUNAR of Homo sapiens (Human).